A 542-amino-acid polypeptide reads, in one-letter code: Chaperonin GroEL 2 (542 aa).

ATP is bound by residues Thr30–Pro33, Lys51, Asp87–Thr91, Gly415, and Asp496.

This sequence belongs to the chaperonin (HSP60) family. In terms of assembly, forms a cylinder of 14 subunits composed of two heptameric rings stacked back-to-back. Interacts with the co-chaperonin GroES.

The protein resides in the cytoplasm. It catalyses the reaction ATP + H2O + a folded polypeptide = ADP + phosphate + an unfolded polypeptide.. In terms of biological role, together with its co-chaperonin GroES, plays an essential role in assisting protein folding. The GroEL-GroES system forms a nano-cage that allows encapsulation of the non-native substrate proteins and provides a physical environment optimized to promote and accelerate protein folding. The chain is Chaperonin GroEL 2 from Rhizobium leguminosarum.